A 206-amino-acid polypeptide reads, in one-letter code: High frequency lysogenization protein HflD homolog (206 aa).

It belongs to the HflD family.

The protein resides in the cytoplasm. The protein localises to the cell inner membrane. The chain is High frequency lysogenization protein HflD homolog from Pseudomonas syringae pv. tomato (strain ATCC BAA-871 / DC3000).